We begin with the raw amino-acid sequence, 359 residues long: Protein mab-21-like 2 (359 aa).

It belongs to the mab-21 family.

It is found in the nucleus. It localises to the cytoplasm. In terms of biological role, required for eye morphogenesis. May promote the survival of proliferating retinal progenitor cells. This Danio rerio (Zebrafish) protein is Protein mab-21-like 2 (mab21l2).